Here is a 163-residue protein sequence, read N- to C-terminus: Lipoprotein signal peptidase (163 aa).

Helical transmembrane passes span 11-31 (ILIA…IATT), 64-84 (MTFF…FFIN), and 88-108 (YNLF…GNFI). Catalysis depends on residues D118 and D136. The chain crosses the membrane as a helical span at residues 131–151 (IFNIADSSLTIGVILIIIALL).

This sequence belongs to the peptidase A8 family.

It localises to the cell membrane. It carries out the reaction Release of signal peptides from bacterial membrane prolipoproteins. Hydrolyzes -Xaa-Yaa-Zaa-|-(S,diacylglyceryl)Cys-, in which Xaa is hydrophobic (preferably Leu), and Yaa (Ala or Ser) and Zaa (Gly or Ala) have small, neutral side chains.. It participates in protein modification; lipoprotein biosynthesis (signal peptide cleavage). Functionally, this protein specifically catalyzes the removal of signal peptides from prolipoproteins. The chain is Lipoprotein signal peptidase from Staphylococcus aureus (strain bovine RF122 / ET3-1).